A 130-amino-acid chain; its full sequence is Small ribosomal subunit protein uS9 (130 aa).

This sequence belongs to the universal ribosomal protein uS9 family.

This chain is Small ribosomal subunit protein uS9, found in Aliivibrio salmonicida (strain LFI1238) (Vibrio salmonicida (strain LFI1238)).